The chain runs to 100 residues: Small ribosomal subunit protein uS14 (100 aa).

It belongs to the universal ribosomal protein uS14 family. In terms of assembly, part of the 30S ribosomal subunit. Contacts proteins S3 and S10.

Functionally, binds 16S rRNA, required for the assembly of 30S particles and may also be responsible for determining the conformation of the 16S rRNA at the A site. This Nostoc sp. (strain PCC 7120 / SAG 25.82 / UTEX 2576) protein is Small ribosomal subunit protein uS14.